The sequence spans 109 residues: Small ribosomal subunit protein uS17 (109 aa).

It belongs to the universal ribosomal protein uS17 family. In terms of assembly, part of the 30S ribosomal subunit.

Its function is as follows. One of the primary rRNA binding proteins, it binds specifically to the 5'-end of 16S ribosomal RNA. In Methanococcus maripaludis (strain DSM 14266 / JCM 13030 / NBRC 101832 / S2 / LL), this protein is Small ribosomal subunit protein uS17.